A 537-amino-acid polypeptide reads, in one-letter code: Syncytin-2 (537 aa).

The signal sequence occupies residues 1-15; the sequence is MGLLLLVLILTPLLA. Over 16-478 the chain is Extracellular; that stretch reads AYRHPDFPLL…GWLNWEGTWK (463 aa). The short motif at 43-46 is the CXXC element; the sequence is CWLC. 3 disulfide bridges follow: Cys43/Cys46, Cys43/Cys439, and Cys431/Cys438. 8 N-linked (GlcNAc...) asparagine glycosylation sites follow: Asn133, Asn146, Asn177, Asn220, Asn241, Asn247, Asn312, and Asn332. A fusion peptide region spans residues 354-374; sequence FIPLLAGLGILAGTGTGIAGI. Positions 414 to 430 match the CKS-17 motif; the sequence is LQNRRGLDMLTAAQGGI. Residues 431–439 carry the CX6CC motif; the sequence is CLALDEKCC. An N-linked (GlcNAc...) asparagine glycan is attached at Asn443. Residues 479–499 form a helical membrane-spanning segment; it reads WFSWVLPFIGPLVSLLLLLLF. The Cytoplasmic segment spans residues 500–537; sequence GPCLLNLITQFVSSRLQAIKLQTNGAGCRPRNIQESPF.

This sequence belongs to the gamma type-C retroviral envelope protein family. HERV class-I FRD env subfamily. The surface and transmembrane proteins form a heterodimer. They are attached by non-covalent interactions or by a labile interchain disulfide bond. In terms of processing, specific enzymatic cleavages in vivo yield the mature SU and TM proteins. The CXXC motif is highly conserved across a broad range of retroviral envelope proteins. It is thought to participate in the formation of a labile disulfide bond possibly with the CX6CC motif present in the transmembrane protein.

It localises to the virion. It is found in the cell membrane. In terms of biological role, this endogenous retroviral envelope protein has retained its original fusogenic properties and participates in trophoblast fusion and the formation of a syncytium during placenta morphogenesis. The interaction with MFSD2A is apparently important for this process. Its function is as follows. Endogenous envelope proteins may have kept, lost or modified their original function during evolution but this one can still make pseudotypes with MLV, HIV-1 or SIV-1 virions and confer infectivity. Retroviral envelope proteins mediate receptor recognition and membrane fusion during early infection. The surface protein mediates receptor recognition, while the transmembrane protein anchors the envelope heterodimer to the viral membrane through one transmembrane domain. The other hydrophobic domain, called fusion peptide, mediates fusion of the viral membrane with the target cell membrane. In Macaca fascicularis (Crab-eating macaque), this protein is Syncytin-2 (ERVFRD-1).